The following is a 217-amino-acid chain: Ribulose-phosphate 3-epimerase (217 aa).

S7 lines the substrate pocket. Residues H32, D34, and H65 each coordinate a divalent metal cation. D34 (proton acceptor) is an active-site residue. Residues H65, 141-144 (GFGG), 175-177 (DGG), and 197-198 (GS) each bind substrate. An a divalent metal cation-binding site is contributed by D175. D175 acts as the Proton donor in catalysis.

It belongs to the ribulose-phosphate 3-epimerase family. It depends on a divalent metal cation as a cofactor.

The enzyme catalyses D-ribulose 5-phosphate = D-xylulose 5-phosphate. It functions in the pathway carbohydrate degradation. Catalyzes the reversible epimerization of D-ribulose 5-phosphate to D-xylulose 5-phosphate. The polypeptide is Ribulose-phosphate 3-epimerase (Bacillus subtilis (strain 168)).